The following is a 143-amino-acid chain: Histone H2AX (143 aa).

A disordered region spans residues 1 to 22 (MSGRGKTGGKARAKAKSRSSRA). The residue at position 2 (S2) is an N-acetylserine. Position 2 is a phosphoserine (S2). K6 and K10 each carry N6-acetyllysine. The span at 7–19 (TGGKARAKAKSRS) shows a compositional bias: basic residues. K10 is modified (N6-lactoyllysine; alternate). Glycyl lysine isopeptide (Lys-Gly) (interchain with G-Cter in ubiquitin) cross-links involve residues K14 and K16. Residue K37 is modified to N6-acetyllysine; by CREBBP and EP300. K120 is covalently cross-linked (Glycyl lysine isopeptide (Lys-Gly) (interchain with G-Cter in ubiquitin)). 2 positions are modified to phosphoserine: S121 and S122. The interval 121–143 (SSATVGPKAPAVGKKASQASQEY) is disordered. Residues K128 and K135 each participate in a glycyl lysine isopeptide (Lys-Gly) (interchain with G-Cter in SUMO2) cross-link. Position 137 is a phosphoserine (S137). At S140 the chain carries Phosphoserine; by ATM, ATR and PRKDC. The short motif at 140–141 (SQ) is the [ST]-Q motif element. Y143 carries the phosphotyrosine; by WSTF modification.

Belongs to the histone H2A family. As to quaternary structure, the nucleosome is a histone octamer containing two molecules each of H2A, H2B, H3 and H4 assembled in one H3-H4 heterotetramer and two H2A-H2B heterodimers. The octamer wraps approximately 147 bp of DNA. Interacts with numerous proteins required for DNA damage signaling and repair when phosphorylated on Ser-140. These include MDC1, BRCA1 and the MRN complex, composed of MRE11, RAD50, and NBN. Interaction with the MRN complex is mediated at least in part by NBN. Also interacts with DHX9/NDHII when phosphorylated on Ser-140 and MCPH1 when phosphorylated at Ser-140 or Tyr-143. Interacts with ARRB2; the interaction is detected in the nucleus upon OR1D2 stimulation. Interacts with WRAP53/TCAB1. Interacts with TP53BP1. Interacts with HDGFL2. In terms of processing, phosphorylated on Ser-140 (to form gamma-H2AX or H2AX139ph) in response to DNA double strand breaks (DSBs) generated by exogenous genotoxic agents, by stalled replication forks, by meiotic recombination events and during immunoglobulin class switching in lymphocytes. Phosphorylation can extend up to several thousand nucleosomes from the actual site of the DSB and may mark the surrounding chromatin for recruitment of proteins required for DNA damage signaling and repair. Widespread phosphorylation may also serve to amplify the damage signal or aid repair of persistent lesions. Phosphorylation of Ser-140 (H2AX139ph) in response to ionizing radiation is mediated by both ATM and PRKDC while defects in DNA replication induce Ser-140 phosphorylation (H2AX139ph) subsequent to activation of ATR and PRKDC. Dephosphorylation of Ser-140 by PP2A is required for DNA DSB repair. In meiosis, Ser-140 phosphorylation (H2AX139ph) first occurs at synaptonemal complexes during leptotene and is an ATM-dependent response to the formation of programmed DSBs by SPO11. Ser-140 phosphorylation (H2AX139ph) subsequently occurs at unsynapsed regions of both autosomes and the XY bivalent during zygotene and is ATR- and BRCA1-dependent. Ser-140 phosphorylation (H2AX139ph) may also be required for transcriptional repression of unsynapsed chromatin and meiotic sex chromosome inactivation (MSCI), whereby the X and Y chromosomes condense in pachytene to form the heterochromatic XY-body. During immunoglobulin class switch recombination in lymphocytes, Ser-140 phosphorylation (H2AX139ph) at sites of DNA-recombination requires the activation-induced cytidine deaminase AICDA. Phosphorylation at Tyr-143 (H2AXY142ph) by BAZ1B/WSTF determines the relative recruitment of either DNA repair or pro-apoptotic factors. Phosphorylation at Tyr-143 (H2AXY142ph) favors the recruitment of APBB1/FE65 and pro-apoptosis factors such as MAPK8/JNK1, triggering apoptosis. In contrast, dephosphorylation of Tyr-143 by EYA proteins (EYA1, EYA2, EYA3 or EYA4) favors the recruitment of MDC1-containing DNA repair complexes to the tail of phosphorylated Ser-140 (H2AX139ph). Phosphorylated by VRK1. Monoubiquitination of Lys-120 (H2AXK119ub) by RING1 and RNF2/RING2 complex gives a specific tag for epigenetic transcriptional repression. Following DNA double-strand breaks (DSBs), it is ubiquitinated through 'Lys-63' linkage of ubiquitin moieties by the E2 ligase UBE2N and the E3 ligases RNF8 and RNF168, leading to the recruitment of repair proteins to sites of DNA damage. Ubiquitination at Lys-14 and Lys-16 (H2AK13Ub and H2AK15Ub, respectively) in response to DNA damage is initiated by RNF168 that mediates monoubiquitination at these 2 sites, and 'Lys-63'-linked ubiquitin are then conjugated to monoubiquitin; RNF8 is able to extend 'Lys-63'-linked ubiquitin chains in vitro. H2AK119Ub and ionizing radiation-induced 'Lys-63'-linked ubiquitination (H2AK13Ub and H2AK15Ub) are distinct events. Post-translationally, acetylation at Lys-6 (H2AXK5ac) by KAT5 component of the NuA4 histone acetyltransferase complex promotes NBN/NBS1 assembly at the sites of DNA damage. Acetylation at Lys-37 increases in S and G2 phases. This modification has been proposed to be important for DNA double-strand break repair. As to expression, most abundant in testis, thymus and spleen.

It is found in the nucleus. It localises to the chromosome. Its function is as follows. Variant histone H2A which replaces conventional H2A in a subset of nucleosomes. Nucleosomes wrap and compact DNA into chromatin, limiting DNA accessibility to the cellular machineries which require DNA as a template. Histones thereby play a central role in transcription regulation, DNA repair, DNA replication and chromosomal stability. DNA accessibility is regulated via a complex set of post-translational modifications of histones, also called histone code, and nucleosome remodeling. Required for checkpoint-mediated arrest of cell cycle progression in response to low doses of ionizing radiation and for efficient repair of DNA double strand breaks (DSBs) specifically when modified by C-terminal phosphorylation. This chain is Histone H2AX, found in Mus musculus (Mouse).